The primary structure comprises 118 residues: V-type proton ATPase subunit G 3 (118 aa).

Residues 1 to 12 show a composition bias toward polar residues; it reads MASQSQGIQQLL. Residues 1-37 are disordered; it reads MASQSQGIQQLLQAEKRAKDKLEEAKKRKNKRLRQAK. A coiled-coil region spans residues 3-53; that stretch reads SQSQGIQQLLQAEKRAKDKLEEAKKRKNKRLRQAKEEATADIDQYRLKREG. Basic and acidic residues predominate over residues 14 to 26; sequence AEKRAKDKLEEAK.

Belongs to the V-ATPase G subunit family. In terms of assembly, V-ATPase is a heteromultimeric enzyme made up of two complexes: the ATP-hydrolytic V1 complex and the proton translocation V0 complex. The V1 complex consists of three catalytic AB heterodimers that form a heterohexamer, three peripheral stalks each consisting of EG heterodimers, one central rotor including subunits D and F, and the regulatory subunits C and H. The proton translocation complex V0 consists of the proton transport subunit a, a ring of proteolipid subunits c9c'', rotary subunit d, subunits e and f, and two accessory subunits.

Its function is as follows. Subunit of the V1 complex of vacuolar(H+)-ATPase (V-ATPase), a multisubunit enzyme composed of a peripheral complex (V1) that hydrolyzes ATP and a membrane integral complex (V0) that translocates protons. V-ATPase is responsible for acidifying and maintaining the pH of intracellular compartments and in some cell types, is targeted to the plasma membrane, where it is responsible for acidifying the extracellular environment. This is V-type proton ATPase subunit G 3 (atp6v1g3) from Xenopus tropicalis (Western clawed frog).